Here is a 384-residue protein sequence, read N- to C-terminus: Ribosomal RNA large subunit methyltransferase G (384 aa).

The protein belongs to the methyltransferase superfamily. RlmG family.

The protein localises to the cytoplasm. It carries out the reaction guanosine(1835) in 23S rRNA + S-adenosyl-L-methionine = N(2)-methylguanosine(1835) in 23S rRNA + S-adenosyl-L-homocysteine + H(+). Functionally, specifically methylates the guanine in position 1835 (m2G1835) of 23S rRNA. The polypeptide is Ribosomal RNA large subunit methyltransferase G (Streptomyces griseus subsp. griseus (strain JCM 4626 / CBS 651.72 / NBRC 13350 / KCC S-0626 / ISP 5235)).